The chain runs to 1612 residues: MAHFQQTMNNKVIEAGMGRNSLINDLAQRRVYDNAVEELNHRSRRPKVNFSKVISQEQIIQATNAYPEFEITFYNTQLAVHSMAGGLRALELEYLMMQIPFGSITYDIGGNFSAHLYKGRDYVHCCMPNLDIRDVARHINQQDTVSTYLARLERSKRGLPVFQQSAFNKYMNDPDAVCCDKRFQDCSYSVDLPGKTYAVALHSIYDIPADEFGAALLRKDVHICYAAFHFSENLLLETTSAPLDEIGATFYKSGDRLSFFFQNESTLNYEHSYKNVIKYVCKTFFPASNRFVYHKEFMCTRVNTWFCKFTKVDTYFLFRGVYTRGEDSEQFYTAMDEAWEYKKTLAMLKCERTIFRDRAAVNFWFPKVKDMVIVPLFDGSVTSGKMKRSEVMVNKDFVYTVLNHIRTYQDKALTYKNVLSFVESIRSRVIINGVSARSEWDVDKSVLQALSMTFLLQTKLAEAKDQVVLKKFQKFDDTVTNLFWKQISDAVGDLFPSIKETLISGGFVKVAEQSLQIKTPDEYITFADKLVMEYKATEELQHLDISKPLERAEKYYNALSELSVLKECDEFDITQFKNLCEEKDIDPDVVAKVIVAIMKNELTLPFKNPTPEALSDALSPLPKDLDMRFDLLKLSTCAPFPSVKTLDSGLLPKQSYGDERQFESQSVVSVSDFHLKSVESVKMKSMSSAVYTGPLKVQQMKNYMDYLSASISATVSNLCKVLKDVYGADPESAEKSGVYDVVKGKWLLKPKGKCHAWGVAELNNGEKVIVLLEWADGFPICGDWRRVAVSSDSLIYSDMGKLQTLLSCLKDGEPVPSDAKVTLVDGVPGCGKTKEILETVNFDEDLILVPGKEACKMIIKRANKSGHVRATKDNVRTVDSFLMHLKPKTYNKLFIDEGLMLHTGCVNFLIALSHCREAMVFGDTEQIPFINRVANFPYPKHFATLVYDHREVRRLSLRCPADVTHFMNSKYDGKVLCTNDVIRSVDAEVVRGKGVFNPKSKPLKGKIITFTQSDKAELKERGYEEVSTFGEINTVHEIQGETFEDVSVVRLTPTPLELISKSSPHVLVALTRHTKSFKYYSVVLDPLVKVCSDLSKVSDFILDMYKVDAGILXQLQVGSIFKGENLFVPCPKSGYISDMQFYYDTLLPGNSTILNEYDAVTMNLRENNLNVKDCTIDFSKSVSVPRQQQEFFTPVIRTAAERPRSRGLLENLVAMIKRNFNSPDLTGILDIEDTAELVVNKFWDAYIIDELSGGNVTPMTSDAFHRWMAKQEKSTIGQLADFDFVDLPAIDQYKHMIKAQPKQKLDLSPQDEYAALQTIVYHSKQINAIFGPLFSELTRQLLERIDSSKFLFYTRKTPEQIEEFFSDLDSTVPMEVLELDISKYDKSQNEFHCAVEYLIWEKLGLNGFLEEVWKQGHRKTSLKDYTAGIKTCLWYQRKSGDVTTFIGNTVIIAACLASMIPMDKVIKAAFCGDDSMLYIPKGLDLPDIQSGANLMWNFEAKLYRKRYGYFCGRYIIHHDRGAIVYYDPVKLISKLGCKHIKSLDHLEEFRISLCDVSASLNNCAYYGQLNDAIAEVHKTAVNGSFAFCSIVKYLSDKNLFRTLFYNGSSTKG.

The interval 50–452 (FSKVISQEQI…DKSVLQALSM (403 aa)) is methyltransferase. Positions 72–280 (TFYNTQLAVH…HSYKNVIKYV (209 aa)) constitute an Alphavirus-like MT domain. In terms of domain architecture, (+)RNA virus helicase ATP-binding spans 794–953 (LIYSDMGKLQ…TLVYDHREVR (160 aa)). The tract at residues 822–1080 (TLVDGVPGCG…TRHTKSFKYY (259 aa)) is helicase. 826 to 833 (GVPGCGKT) lines the ATP pocket. The region spanning 954-1112 (RLSLRCPADV…DMYKVDAGIL (159 aa)) is the (+)RNA virus helicase C-terminal domain. The 114-residue stretch at 1374–1487 (MEVLELDISK…YIPKGLDLPD (114 aa)) folds into the RdRp catalytic domain.

This sequence belongs to the ssRNA positive-strand viruses RNA-directed RNA polymerase family. Heterodimer of a large and a small subunit.

It carries out the reaction RNA(n) + a ribonucleoside 5'-triphosphate = RNA(n+1) + diphosphate. The enzyme catalyses ATP + H2O = ADP + phosphate + H(+). In terms of biological role, is an RNA-dependent RNA polymerase active in viral RNA replication. Its function is as follows. Is a methyltransferase active in RNA capping and an RNA helicase. Methyltransferase displays a cytoplasmic capping enzyme activity. This function is necessary since all viral RNAs are synthesized in the cytoplasm, and host capping enzymes are restricted to the nucleus. Helicase region probably exhibits NTPase and RNA unwinding activities (Potential). It also acts as a suppressor of RNA-mediated gene silencing, also known as post-transcriptional gene silencing (PTGS), a mechanism of plant viral defense that limits the accumulation of viral RNAs. May mediate silencing suppression through either inhibition of HEN1-mediated siRNA or siRNA demethylation. The polypeptide is Replicase large subunit (Cymbidium (ORSV-Cy)).